We begin with the raw amino-acid sequence, 1171 residues long: MRGARKSMGRVSYLRLPHLSGDQLCFVAEDDLWLASLDGPGRAWRLTVDRTKAGPPRFSPDGRHIAYTSWRTLVPEVHLVPVDGGPGRQLTHWGGLDTRVCGWSPPDPDGTTAVLAVASHGEPFSHLTWAYKVTPDGDPGRKLPWGPVTDIQAADLDGERRTLLLTGTPPHEPAAWKRYRGGATGRLWLHGERLLPDLGGHLSAPMFVGGRIAFLSDHEGVGNLYSCAQDGTGLRRHTDHDAFYARNAASDGTRVVYQCAGDLWIVDDLAPGSAPRRLDVRLSGPRAGRRTHQVPAAQHVGGISVDETGRASAVVVRGSLYWLTHRDGPARTIADTPGVRVRLPEMLGESGRIAYVTDAEGEDAVEISYLPRATGGRAARRLASGRLGRVLELVSDPAGDRLAVASHDGRLLILDVAEPDTEVTLALEAVDAGYPPDAGDEDAAGTAARADSAPDAPAEDTDARDIAAGTGTGDIADADAAAGGTVTPGSPGTPATAGGQVTELIRSVNGPVRDLAFSPDGTWLTWSHPGIGRTLRQIKMARIDGPEGTLVVDVTNGRFEDENPVFTRDGRYLAFLSWRGFDPVYDVHTGDLSFPLGCRPYLVPLSSATPSPFALNPEGRPAAGGLDPLEDEPGEGGAVMVEVEGLESRVTPFPVTASKYSALEPVAGGGLVWLRWPISGALGETFANPADPSERPTLEHFNLAKAKKSELVDHLDWFRVSGDGSRLVVLDEGELRAVPASEVGDGDSTTWIDLRRILHEVDPAAEWRQAYDEAGRLIRAYFWDPGMCGIDWDAVLDQYRPLLERVASPDEFADLLREVLGELGTSHAYVVAARRNEGPAHYQRWQGLLGANLACRDGRWLVRRILPGDSSDSKARSPLAGTGIRDGAVLTHVDGRPVDPVLGPSPLLAGAGGTTVELTFAPAEGCQGPSRRVAVVPLVDERPLRYQDWVAKRREVVRELSGGRCGYLHIPDMGGSGWAQFNRDLRMEVSRPALIVDVRGNAGGHISELVIEKLTRTILGWDLTRDAQPVSYTSNAPRGPVVAVADEATSSDGDMITAAFKLLRLGPVVGQRTWGGVVGMTGRHRLGDGSVITVPMNAAWFDAYGWSVENYGVAPDVEALRTPLDWAEGRYPVLDEAVRLALELLETNPPATPPGYEAVPDRSRPPLPPRE.

Residues 432–498 form a disordered region; the sequence is AGYPPDAGDE…GSPGTPATAG (67 aa). Low complexity-rich tracts occupy residues 444-456 and 466-498; these read AGTAARADSAPDA and IAAGTGTGDIADADAAAGGTVTPGSPGTPATAG. Histidine 827 acts as the Charge relay system in catalysis. The interval 842–941 is PDZ-like; sequence YQRWQGLLGA…RVAVVPLVDE (100 aa). 1002-1004 contacts substrate; it reads AGG. Serine 1051 serves as the catalytic Nucleophile. Position 1079–1081 (1079–1081) interacts with substrate; the sequence is GMT. The Charge relay system role is filled by glutamate 1109. A disordered region spans residues 1149–1171; that stretch reads PPATPPGYEAVPDRSRPPLPPRE. Residues 1159–1171 show a composition bias toward basic and acidic residues; that stretch reads VPDRSRPPLPPRE.

It belongs to the peptidase S41B family.

It localises to the cytoplasm. In terms of biological role, degrades oligopeptides in a sequential manner. In Streptomyces coelicolor (strain ATCC BAA-471 / A3(2) / M145), this protein is Putative tricorn protease homolog 2 (tri2).